Consider the following 506-residue polypeptide: MTTPKPVVLCILDGWGSAEPGPANAPYLAKTPTLDAIMQSCPTARLVTHGPDVGLPSGQMGNSEVGHTNIGAGRVVAMDLGQIDLAIEDGSFYDNDALQAFIAKLKETGGAAHLMGLVSDGGVHGHVTHILAAIKAIRDAGVPVWLHAITDGRDVAPKSALTYLDQLEAGMAPGAQIATVTGRYFAMDRDNRWERVSEAYDAMVKGAGQFTAATARDAVENAYGRDELDEFVKATVVEGFDGIKEGDGFFCLNFRADRAREILRAIGEPGFAEFDTGPRPALAALLGMVEYSEGHNAYMTTAYPKRAIVNTLGEWVAKQGKRQFRLAETEKYPHVTFFLNGGKETPEVGEDRFMPKSPKVATYDLQPEMSAPEVTAKFVEAIRAGYDLIVTNYANPDMVGHTGDLDAAIKACEAVDQGLGEVVAALKDAGGAMIVTADHGNCELMVDPETGGAHTAHTTNLVPVALVGGPEGTALKDGRLADLAPTLLALMGLDQPEEMTGESLLV.

Positions 13 and 63 each coordinate Mn(2+). Serine 63 acts as the Phosphoserine intermediate in catalysis. Substrate is bound by residues histidine 124, 153-154 (RD), arginine 183, arginine 189, 255-258 (RADR), and lysine 331. Residues aspartate 397, histidine 401, aspartate 438, histidine 439, and histidine 457 each contribute to the Mn(2+) site.

The protein belongs to the BPG-independent phosphoglycerate mutase family. As to quaternary structure, monomer. It depends on Mn(2+) as a cofactor.

The enzyme catalyses (2R)-2-phosphoglycerate = (2R)-3-phosphoglycerate. The protein operates within carbohydrate degradation; glycolysis; pyruvate from D-glyceraldehyde 3-phosphate: step 3/5. Catalyzes the interconversion of 2-phosphoglycerate and 3-phosphoglycerate. This chain is 2,3-bisphosphoglycerate-independent phosphoglycerate mutase, found in Ruegeria sp. (strain TM1040) (Silicibacter sp.).